A 190-amino-acid polypeptide reads, in one-letter code: Elongation factor P (190 aa).

Belongs to the elongation factor P family.

It localises to the cytoplasm. The protein operates within protein biosynthesis; polypeptide chain elongation. In terms of biological role, involved in peptide bond synthesis. Stimulates efficient translation and peptide-bond synthesis on native or reconstituted 70S ribosomes in vitro. Probably functions indirectly by altering the affinity of the ribosome for aminoacyl-tRNA, thus increasing their reactivity as acceptors for peptidyl transferase. This is Elongation factor P from Pseudomonas fluorescens (strain SBW25).